The sequence spans 85 residues: Large ribosomal subunit protein bL27 (85 aa).

The tract at residues 1–22 (MAHKKGQGSTQNNRDSAGRRLG) is disordered.

The protein belongs to the bacterial ribosomal protein bL27 family.

The protein is Large ribosomal subunit protein bL27 of Sulfurimonas denitrificans (strain ATCC 33889 / DSM 1251) (Thiomicrospira denitrificans (strain ATCC 33889 / DSM 1251)).